Here is a 1420-residue protein sequence, read N- to C-terminus: DNA-directed RNA polymerase subunit beta' (1420 aa).

Positions 72, 74, 87, and 90 each coordinate Zn(2+). Positions 462, 464, and 466 each coordinate Mg(2+). Cys816, Cys896, Cys903, and Cys906 together coordinate Zn(2+).

This sequence belongs to the RNA polymerase beta' chain family. The RNAP catalytic core consists of 2 alpha, 1 beta, 1 beta' and 1 omega subunit. When a sigma factor is associated with the core the holoenzyme is formed, which can initiate transcription. Requires Mg(2+) as cofactor. Zn(2+) serves as cofactor.

It catalyses the reaction RNA(n) + a ribonucleoside 5'-triphosphate = RNA(n+1) + diphosphate. Its function is as follows. DNA-dependent RNA polymerase catalyzes the transcription of DNA into RNA using the four ribonucleoside triphosphates as substrates. The protein is DNA-directed RNA polymerase subunit beta' of Blochmanniella floridana.